Consider the following 311-residue polypeptide: L-lactate dehydrogenase 2 (311 aa).

Residues Val-14, Asp-35, and Arg-40 each contribute to the NAD(+) site. Residue Arg-90 coordinates substrate. NAD(+)-binding positions include Ser-103, Ala-120–Asn-122, and Thr-145. A substrate-binding site is contributed by Asn-122–Asp-125. Asp-150–Arg-153 contributes to the substrate binding site. The Proton acceptor role is filled by His-177. Thr-230 lines the substrate pocket.

It belongs to the LDH/MDH superfamily. LDH family. Homotetramer.

It localises to the cytoplasm. It catalyses the reaction (S)-lactate + NAD(+) = pyruvate + NADH + H(+). It functions in the pathway fermentation; pyruvate fermentation to lactate; (S)-lactate from pyruvate: step 1/1. In terms of biological role, catalyzes the conversion of lactate to pyruvate. This is L-lactate dehydrogenase 2 from Listeria monocytogenes serotype 4b (strain F2365).